Here is a 676-residue protein sequence, read N- to C-terminus: DNA ligase (676 aa).

Residues 35 to 39 (DYEFD), 84 to 85 (SL), and glutamate 118 contribute to the NAD(+) site. Catalysis depends on lysine 120, which acts as the N6-AMP-lysine intermediate. Residues arginine 141, glutamate 184, lysine 299, and lysine 323 each coordinate NAD(+). Zn(2+) is bound by residues cysteine 417, cysteine 420, cysteine 435, and cysteine 441. Residues 600-676 (LINRNFEGVN…ISEDEFNAML (77 aa)) enclose the BRCT domain.

The protein belongs to the NAD-dependent DNA ligase family. LigA subfamily. Mg(2+) serves as cofactor. Mn(2+) is required as a cofactor.

The enzyme catalyses NAD(+) + (deoxyribonucleotide)n-3'-hydroxyl + 5'-phospho-(deoxyribonucleotide)m = (deoxyribonucleotide)n+m + AMP + beta-nicotinamide D-nucleotide.. Functionally, DNA ligase that catalyzes the formation of phosphodiester linkages between 5'-phosphoryl and 3'-hydroxyl groups in double-stranded DNA using NAD as a coenzyme and as the energy source for the reaction. It is essential for DNA replication and repair of damaged DNA. The sequence is that of DNA ligase from Chlorobium phaeobacteroides (strain DSM 266 / SMG 266 / 2430).